Reading from the N-terminus, the 273-residue chain is Glutamate 5-kinase (273 aa).

Lysine 15 contributes to the ATP binding site. 3 residues coordinate substrate: serine 55, aspartate 142, and asparagine 158. ATP-binding positions include 178 to 179 and 220 to 226; these read SD and TGGMLSK.

It belongs to the glutamate 5-kinase family.

The protein localises to the cytoplasm. The catalysed reaction is L-glutamate + ATP = L-glutamyl 5-phosphate + ADP. It participates in amino-acid biosynthesis; L-proline biosynthesis; L-glutamate 5-semialdehyde from L-glutamate: step 1/2. Catalyzes the transfer of a phosphate group to glutamate to form L-glutamate 5-phosphate. This Streptococcus pyogenes serotype M2 (strain MGAS10270) protein is Glutamate 5-kinase.